We begin with the raw amino-acid sequence, 324 residues long: Protoheme IX farnesyltransferase 2 (324 aa).

Transmembrane regions (helical) follow at residues 39–59, 63–83, 115–135, 137–157, 166–186, 192–212, 239–259, 260–280, and 302–322; these read LIKP…MLLA, IPSP…AGSA, HALV…WATT, LLSA…YTLV, IVWG…GVTG, ALVM…SLAM, IVVF…ATGW, LYTA…HRLH, and LMIV…VLGW.

The protein belongs to the UbiA prenyltransferase family. Protoheme IX farnesyltransferase subfamily.

It localises to the cell membrane. It catalyses the reaction heme b + (2E,6E)-farnesyl diphosphate + H2O = Fe(II)-heme o + diphosphate. The protein operates within porphyrin-containing compound metabolism; heme O biosynthesis; heme O from protoheme: step 1/1. Converts heme B (protoheme IX) to heme O by substitution of the vinyl group on carbon 2 of heme B porphyrin ring with a hydroxyethyl farnesyl side group. The chain is Protoheme IX farnesyltransferase 2 from Saccharopolyspora erythraea (strain ATCC 11635 / DSM 40517 / JCM 4748 / NBRC 13426 / NCIMB 8594 / NRRL 2338).